We begin with the raw amino-acid sequence, 200 residues long: Ribonuclease HII (200 aa).

The 187-residue stretch at 14 to 200 folds into the RNase H type-2 domain; the sequence is ERVAGLDEAG…HRQSFTLFRD (187 aa). D20, E21, and D112 together coordinate a divalent metal cation.

Belongs to the RNase HII family. Mn(2+) serves as cofactor. Requires Mg(2+) as cofactor.

Its subcellular location is the cytoplasm. The enzyme catalyses Endonucleolytic cleavage to 5'-phosphomonoester.. Functionally, endonuclease that specifically degrades the RNA of RNA-DNA hybrids. The sequence is that of Ribonuclease HII from Salinibacter ruber (strain DSM 13855 / M31).